The chain runs to 345 residues: 3-isopropylmalate dehydrogenase (345 aa).

76 to 87 contributes to the NAD(+) binding site; sequence GPKYDNAPVRPE. Substrate contacts are provided by Arg-94, Arg-104, Arg-132, and Asp-216. Residues Asp-216, Asp-240, and Asp-244 each contribute to the Mg(2+) site. 274 to 286 provides a ligand contact to NAD(+); it reads GSAPDIAGQGIAN.

It belongs to the isocitrate and isopropylmalate dehydrogenases family. LeuB type 1 subfamily. As to quaternary structure, homodimer. Mg(2+) is required as a cofactor. Mn(2+) serves as cofactor.

Its subcellular location is the cytoplasm. It catalyses the reaction (2R,3S)-3-isopropylmalate + NAD(+) = 4-methyl-2-oxopentanoate + CO2 + NADH. It functions in the pathway amino-acid biosynthesis; L-leucine biosynthesis; L-leucine from 3-methyl-2-oxobutanoate: step 3/4. Its function is as follows. Catalyzes the oxidation of 3-carboxy-2-hydroxy-4-methylpentanoate (3-isopropylmalate) to 3-carboxy-4-methyl-2-oxopentanoate. The product decarboxylates to 4-methyl-2 oxopentanoate. In Streptococcus thermophilus (strain CNRZ 1066), this protein is 3-isopropylmalate dehydrogenase.